A 199-amino-acid chain; its full sequence is Guanylate kinase (199 aa).

A Guanylate kinase-like domain is found at 20 to 198; it reads GKLIVLTGPS…ALQAIEVALF (179 aa). 27-34 serves as a coordination point for ATP; that stretch reads GPSGVGKG.

The protein belongs to the guanylate kinase family.

It is found in the cytoplasm. It catalyses the reaction GMP + ATP = GDP + ADP. In terms of biological role, essential for recycling GMP and indirectly, cGMP. The sequence is that of Guanylate kinase from Trichormus variabilis (strain ATCC 29413 / PCC 7937) (Anabaena variabilis).